Reading from the N-terminus, the 144-residue chain is Conopressin-conophysin (144 aa).

Positions 1–27 are cleaved as a signal peptide; sequence MTRSALQMGRLTLVLCLLLQLVLVTQA. Cysteine 28 and cysteine 33 are joined by a disulfide. Aspartate 36 carries the post-translational modification Aspartic acid 1-amide. The propeptide occupies 37-44; that stretch reads GERDVDGR. 7 disulfide bridges follow: cysteine 50-cysteine 90, cysteine 53-cysteine 64, cysteine 58-cysteine 80, cysteine 65-cysteine 70, cysteine 97-cysteine 117, cysteine 109-cysteine 129, and cysteine 118-cysteine 123. A propeptide spanning residues 131-144 is cleaved from the precursor; the sequence is KESKSGIRVGCQRS.

It belongs to the vasopressin/oxytocin family. Expressed by the venom duct.

The protein localises to the secreted. The chain is Conopressin-conophysin from Conus bayani (Bayan's cone).